A 696-amino-acid polypeptide reads, in one-letter code: Tensin-4 (696 aa).

An N-terminal signal peptide occupies residues 1-14 (MSSSLLAGGHMVSL). Disordered regions lie at residues 157–246 (LDGP…RAPQ), 271–344 (SLPH…CPAS), and 356–416 (LING…KDMQ). Over residues 192 to 203 (SSSNESLIFSGN) the composition is skewed to polar residues. Serine 230 bears the Phosphoserine mark. A compositionally biased stretch (low complexity) spans 271–304 (SLPHSSLSSYPSSSRSLGSPASSSSSLHSLDRGS). 2 stretches are compositionally biased toward polar residues: residues 326–344 (QAVQ…CPAS) and 372–397 (PGHQ…SPSK). The SH2 domain maps to 429-536 (WFKPSITREQ…ALPCKLTIPQ (108 aa)). A PTB domain is found at 563-690 (CHTLYLSSVS…QVISLVTALL (128 aa)).

Belongs to the PTEN phosphatase protein family. As to quaternary structure, interacts (via SH2 domain) with Rho GTPase-activating protein DLC1 (via C-terminus); the interaction is independent of DLC1 tyrosine phosphorylation. Interacts with integrin ITGB1; the interaction displaces tensin TNS3 from the ITGB1 cytoplasmic tail and promotes ITGB1 stability. Interacts (via SH2 domain) with E3 ubiquitin-protein ligase CBL (phosphorylated on 'Tyr-780'); the interaction is enhanced in the presence of EGF and reduces interaction of CBL with EGFR. Interacts (via SH2 domain) with receptor tyrosine kinase MET (when phosphorylated); the interaction increases MET protein stability.

Its subcellular location is the cell junction. The protein localises to the focal adhesion. It is found in the cytoplasm. The protein resides in the cytoskeleton. Functionally, promotes EGF-induced cell migration by displacing tensin TNS3 from the cytoplasmic tail of integrin ITGB1 which results in dissociation of TNS3 from focal adhesions, disassembly of actin stress fibers and initiation of cell migration. Suppresses ligand-induced degradation of EGFR by reducing EGFR ubiquitination in the presence of EGF. Increases MET protein stability by inhibiting MET endocytosis and subsequent lysosomal degradation which leads to increased cell survival, proliferation and migration. This Mus musculus (Mouse) protein is Tensin-4 (Tns4).